Reading from the N-terminus, the 104-residue chain is Pterin-4-alpha-carbinolamine dehydratase (104 aa).

N-acetylalanine is present on Ala2. Substrate is bound by residues 61–63 and 78–81; these read DHH and STHE.

Belongs to the pterin-4-alpha-carbinolamine dehydratase family. In terms of assembly, homotetramer and homodimer. As to expression, the major tissues expressing cDcoH are hypothalamus, kidney and liver.

The protein localises to the cytoplasm. Its subcellular location is the nucleus. It carries out the reaction (4aS,6R)-4a-hydroxy-L-erythro-5,6,7,8-tetrahydrobiopterin = (6R)-L-erythro-6,7-dihydrobiopterin + H2O. Functionally, involved in tetrahydrobiopterin biosynthesis. Seems to both prevent the formation of 7-pterins and accelerate the formation of quinonoid-BH2. Coactivator for HNF1A-dependent transcription. Regulates the dimerization of homeodomain protein HNF1A and enhances its transcriptional activity. Also acts as a coactivator for HNF1B-dependent transcription. This chain is Pterin-4-alpha-carbinolamine dehydratase (PCBD1), found in Gallus gallus (Chicken).